A 315-amino-acid chain; its full sequence is MTTKPPLTLRLAAPRGFCAGVDRAIQIVEEALKKWGAPVYVRHEIVHNRHVVERLEALGAIFVEELEECPDDRPVIFSAHGVPKSVPAEAGRRNMIYVDATCPLVSKVHVEAERHFNAAREIVLIGHAGHPEVIGTMGQLPEGSVALIETVEDARAFQPRDHANLAFITQTTLSVDDTADIVAALQSRFPGIATPHKEDICYATTNRQEAVKVFAPGAELVLVIGARTSSNSVRLVEVALRAGAQDAKLIASADDIDWSWFNGITTLGLTAGASAPEDLVQGVIEACRDRFEVTVETVKTADETVTFKLPRVLAG.

Cysteine 18 serves as a coordination point for [4Fe-4S] cluster. Positions 47 and 80 each coordinate (2E)-4-hydroxy-3-methylbut-2-enyl diphosphate. Histidine 47 and histidine 80 together coordinate dimethylallyl diphosphate. Isopentenyl diphosphate-binding residues include histidine 47 and histidine 80. Cysteine 102 is a [4Fe-4S] cluster binding site. Histidine 130 is a (2E)-4-hydroxy-3-methylbut-2-enyl diphosphate binding site. A dimethylallyl diphosphate-binding site is contributed by histidine 130. Histidine 130 contacts isopentenyl diphosphate. The active-site Proton donor is the glutamate 132. Residue threonine 171 coordinates (2E)-4-hydroxy-3-methylbut-2-enyl diphosphate. Residue cysteine 201 participates in [4Fe-4S] cluster binding. (2E)-4-hydroxy-3-methylbut-2-enyl diphosphate-binding residues include serine 229, serine 230, asparagine 231, and serine 274. Positions 229, 230, 231, and 274 each coordinate dimethylallyl diphosphate. Residues serine 229, serine 230, asparagine 231, and serine 274 each contribute to the isopentenyl diphosphate site.

Belongs to the IspH family. The cofactor is [4Fe-4S] cluster.

It carries out the reaction isopentenyl diphosphate + 2 oxidized [2Fe-2S]-[ferredoxin] + H2O = (2E)-4-hydroxy-3-methylbut-2-enyl diphosphate + 2 reduced [2Fe-2S]-[ferredoxin] + 2 H(+). The catalysed reaction is dimethylallyl diphosphate + 2 oxidized [2Fe-2S]-[ferredoxin] + H2O = (2E)-4-hydroxy-3-methylbut-2-enyl diphosphate + 2 reduced [2Fe-2S]-[ferredoxin] + 2 H(+). It participates in isoprenoid biosynthesis; dimethylallyl diphosphate biosynthesis; dimethylallyl diphosphate from (2E)-4-hydroxy-3-methylbutenyl diphosphate: step 1/1. Its pathway is isoprenoid biosynthesis; isopentenyl diphosphate biosynthesis via DXP pathway; isopentenyl diphosphate from 1-deoxy-D-xylulose 5-phosphate: step 6/6. Catalyzes the conversion of 1-hydroxy-2-methyl-2-(E)-butenyl 4-diphosphate (HMBPP) into a mixture of isopentenyl diphosphate (IPP) and dimethylallyl diphosphate (DMAPP). Acts in the terminal step of the DOXP/MEP pathway for isoprenoid precursor biosynthesis. The polypeptide is 4-hydroxy-3-methylbut-2-enyl diphosphate reductase (Hyphomonas neptunium (strain ATCC 15444)).